A 148-amino-acid polypeptide reads, in one-letter code: Gas vesicle protein J (148 aa).

2 disordered regions span residues 1-21 (MTTT…VIPT) and 118-148 (EETT…QLEA). Residues 136–148 (VNSQEGDNSQLEA) show a composition bias toward polar residues.

It belongs to the gas vesicle GvpA family. As to quaternary structure, interacts with GvpA.

It is found in the gas vesicle. A minor component of the gas vesicle, might be involved in nucleating gas vesicle formation. Gas vesicles (GV) are hollow, gas filled proteinaceous nanostructures. During planktonic growth they allow positioning of the organism at a favorable depth for light or nutrient acquisition. In terms of biological role, cluster expression in E.coli (gvpA1-gvpA2-gvpC-gvpN-gvpJ-gvpK-gvpF-gvpG-gvpV-gvpW) allows cells to float and produces irregularly shaped gas vesicles. The sequence is that of Gas vesicle protein J from Nostoc sp. (strain PCC 7120 / SAG 25.82 / UTEX 2576).